The sequence spans 815 residues: Sodium/hydrogen exchanger 1 (815 aa).

Topologically, residues 1–98 are extracellular; sequence MVLRSGICGL…FPVLGIDYTH (98 aa). Residue T42 is glycosylated (O-linked (GalNAc...) threonine). A disordered region spans residues 42–79; that stretch reads TASTIRSSEPPRERSIGDVTTAPPEVTPESRPVNHSVT. O-linked (GalNAc...) serine glycosylation is present at S56. T61, T62, and T68 each carry an O-linked (GalNAc...) threonine glycan. Residue N75 is glycosylated (N-linked (GlcNAc...) asparagine). The helical transmembrane segment at 99 to 121 threads the bilayer; the sequence is VRTPFEISLWILLACLMKIGFHV. Residues 122–130 are Cytoplasmic-facing; the sequence is IPTISSIVP. The chain crosses the membrane as a helical span at residues 131–148; sequence ESCLLIVVGLLVGGLIKG. Residues 149–158 are Extracellular-facing; that stretch reads VGETPPFLQS. A helical transmembrane segment spans residues 159 to 176; sequence DVFFLFLLPPIILDAGYF. At 177 to 186 the chain is on the cytoplasmic side; it reads LPLRQFTENL. A helical transmembrane segment spans residues 187 to 215; it reads GTILIFAVVGTLWNAFFLGGLMYAVCLVG. Topologically, residues 216 to 222 are extracellular; sequence GEQINNI. The helical transmembrane segment at 223 to 249 threads the bilayer; it reads GLLDNLLFGSIISAVDPVAVLAVFEEI. The Cytoplasmic segment spans residues 250–252; it reads HIN. Residues 253-283 form a helical membrane-spanning segment; it reads ELLHILVFGESLLNDAVTVVLYHLFEEFANY. Residues 284 to 287 are Extracellular-facing; it reads EHVG. Residues 288-322 form a helical membrane-spanning segment; it reads IVDIFLGFLSFFVVALGGVLVGVVYGVIAAFTSRF. At 323-328 the chain is on the cytoplasmic side; that stretch reads TSHIRV. A helical transmembrane segment spans residues 329 to 341; that stretch reads IEPLFVFLYSYMA. At 342 to 350 the chain is on the extracellular side; it reads YLSAELFHL. The helical transmembrane segment at 351-371 threads the bilayer; sequence SGIMALIASGVVMRPYVEANI. Topologically, residues 372–373 are cytoplasmic; it reads SH. Residues 374–404 traverse the membrane as a helical segment; sequence KSHTTIKYFLKMWSSVSETLIFIFLGVSTVA. Topologically, residues 405 to 410 are extracellular; that stretch reads GSHHWN. A helical membrane pass occupies residues 411 to 438; that stretch reads WTFVISTLLFCLIARVLGVLGLTWFINK. At 439 to 444 the chain is on the cytoplasmic side; the sequence is FRIVKL. The helical transmembrane segment at 445-469 threads the bilayer; that stretch reads TPKDQFIIAYGGLRGAIAFSLGYLL. The Extracellular portion of the chain corresponds to 470–475; the sequence is DKKHFP. The chain crosses the membrane as a helical span at residues 476 to 505; that stretch reads MCDLFLTAIITVIFFTVFVQGMTIRPLVDL. An interaction with TESC region spans residues 503 to 545; that stretch reads VDLLAVKKKQETKRSINEEIHTQFLDHLLTGIEDICGHYGHHH. At 506–815 the chain is on the cytoplasmic side; that stretch reads LAVKKKQETK…EGEPFFPKGQ (310 aa). The interval 509-516 is PI(4,5)P2-binding region; the sequence is KKKQETKR. An interaction with CHP2 region spans residues 515-545; the sequence is KRSINEEIHTQFLDHLLTGIEDICGHYGHHH. Residues 540 to 545 form a confers pH-dependent PI(4,5)P2 binding region; the sequence is HYGHHH. The PI(4,5)P2-binding region stretch occupies residues 552 to 560; that stretch reads RFNKKYVKK. S599 and S602 each carry phosphoserine. T603 is modified (phosphothreonine). Residues S605 and S648 each carry the phosphoserine modification. The segment at 633-815 is interaction with TESC; that stretch reads KILRNNLQKT…EGEPFFPKGQ (183 aa). Residues 633-815 are interaction with CALM1; it reads KILRNNLQKT…EGEPFFPKGQ (183 aa). The interval 684 to 687 is interaction with PPP3CA; it reads LTVP. A phosphoserine mark is found at S693, S697, and S703. Residues 715–720 are interaction with PPP3CA; sequence PVITID. Phosphoserine occurs at positions 723, 726, and 729. A disordered region spans residues 744–815; sequence LSRDPAKVAE…EGEPFFPKGQ (72 aa). T779 is modified (phosphothreonine). The span at 782-791 shows a compositional bias: polar residues; the sequence is PSDSPSSQRI. Phosphoserine is present on residues S785, S787, and S796.

Belongs to the monovalent cation:proton antiporter 1 (CPA1) transporter (TC 2.A.36) family. In terms of assembly, homodimer; dimerization is crucial for its function. Oligomer. Interacts with CALM1 in a calcium-dependent manner. Interacts with TESC. Interacts (via the C-terminal domain) with CHP1; the interaction occurs at the plasma membrane in a calcium-dependent manner and facilitates the maturation, cell surface expression, and function of SLC9A3. Interacts with CHP2; the interaction occurs in a calcium-dependent manner. Interacts with EZR; regulates the cytoskeletal interactions of SLC9A1 and promotes stress fiber formation. In terms of processing, O-glycosylated. Ubiquitinated, leading to its degradation by the proteasome. Ubiquitination is reduced by CHP1. Post-translationally, phosphorylation at Thr-779 increases SLC9A1 activity. Specifically dephosphorylated at Thr-779 by PPP3CA that negatively regulates SLC9A1 activity. Phosphorylation at Ser-648 by AKT1 reduces SLC9A1 binding to CALM1. In terms of processing, palmitoylated; may play a major role in SLC9A1 regulation. Kidney and intestine.

Its subcellular location is the cell membrane. The protein resides in the basolateral cell membrane. The enzyme catalyses Na(+)(in) + H(+)(out) = Na(+)(out) + H(+)(in). It carries out the reaction Li(+)(out) + H(+)(in) = Li(+)(in) + H(+)(out). It catalyses the reaction Li(+)(in) + Na(+)(out) = Li(+)(out) + Na(+)(in). Its activity is regulated as follows. Activated at acidic pHs. Inhibited by amiloride and 5-amino-substituted derivatives. Inhibited by cariporide and eniporide. Phosphatidylinositol 4,5-bisphosphate (PI(4,5)P2) and phosphatidylinositol 3,4,5-trisphosphate (PI(3,4,5)P3) bind and differentially regulate SLC9A1 activity. Functionally, electroneutral Na(+) /H(+) antiporter that extrudes Na(+) in exchange for external protons driven by the inward sodium ion chemical gradient, protecting cells from acidification that occurs from metabolism. Exchanges intracellular H(+) ions for extracellular Na(+) in 1:1 stoichiometry. Plays a key role in maintening intracellular pH neutral and cell volume, and thus is important for cell growth, proliferation, migration and survival. In addition, can transport lithium Li(+) and also functions as a Na(+)/Li(+) antiporter. SLC9A1 also functions in membrane anchoring and organization of scaffolding complexes that coordinate signaling inputs. The sequence is that of Sodium/hydrogen exchanger 1 from Homo sapiens (Human).